A 290-amino-acid chain; its full sequence is uncharacterized protein (290 aa).

The stretch at 161-216 (SNQREVESLEQLVHEQLNKLNTESKMEFENRKNDTKNEVQQLSARIVELHNLLAVS) forms a coiled coil. Residues 236–256 (AGVVMAFTGFLVLVIPFGLGV) form a helical membrane-spanning segment.

The protein localises to the mitochondrion membrane. This is an uncharacterized protein from Schizosaccharomyces pombe (strain 972 / ATCC 24843) (Fission yeast).